A 200-amino-acid chain; its full sequence is Recombination protein RecR (200 aa).

The C4-type zinc finger occupies cysteine 58–cysteine 75. Residues serine 82–proline 177 enclose the Toprim domain.

Belongs to the RecR family.

Functionally, may play a role in DNA repair. It seems to be involved in an RecBC-independent recombinational process of DNA repair. It may act with RecF and RecO. This is Recombination protein RecR from Chlamydia caviae (strain ATCC VR-813 / DSM 19441 / 03DC25 / GPIC) (Chlamydophila caviae).